The primary structure comprises 347 residues: MTNAVQTHTPAARAKPKKAIQGEKLRGYDKVARIPIKIIPTVEAKKKPDWIRVKLSSPAEVARIKSTLREQKLYTVCEEAACPNLPQCFADGTATFMIMGDICTRRCPFCDVGHGRPNELDKDEPRHTAETIQGLGLKYAVITSVDRDDLKDGGAMHFVEVLNESRALSPNCLIEILVPDFRGRMDIALDLLTETAPDVFNHNIETVPRLYKAFRPGSDYQHSLDLLKIYKERRPDIATKCGFMVGLGETEEEIYKLLDDLKAHNVDMITVGQYLQPSKDHAPVDRYVHPDEFQRYMDYGKKIGFFNIWAGPMVRSSYFADRQYYGEDCPAPIRSKKALAAEGKLGC.

[4Fe-4S] cluster contacts are provided by Cys77, Cys82, Cys88, Cys103, Cys107, Cys110, and Ser317. The Radical SAM core domain maps to 89–306 (FADGTATFMI…MDYGKKIGFF (218 aa)).

Belongs to the radical SAM superfamily. Lipoyl synthase family. It depends on [4Fe-4S] cluster as a cofactor.

It localises to the cytoplasm. The catalysed reaction is [[Fe-S] cluster scaffold protein carrying a second [4Fe-4S](2+) cluster] + N(6)-octanoyl-L-lysyl-[protein] + 2 oxidized [2Fe-2S]-[ferredoxin] + 2 S-adenosyl-L-methionine + 4 H(+) = [[Fe-S] cluster scaffold protein] + N(6)-[(R)-dihydrolipoyl]-L-lysyl-[protein] + 4 Fe(3+) + 2 hydrogen sulfide + 2 5'-deoxyadenosine + 2 L-methionine + 2 reduced [2Fe-2S]-[ferredoxin]. It functions in the pathway protein modification; protein lipoylation via endogenous pathway; protein N(6)-(lipoyl)lysine from octanoyl-[acyl-carrier-protein]: step 2/2. Its function is as follows. Catalyzes the radical-mediated insertion of two sulfur atoms into the C-6 and C-8 positions of the octanoyl moiety bound to the lipoyl domains of lipoate-dependent enzymes, thereby converting the octanoylated domains into lipoylated derivatives. This Psychrobacter cryohalolentis (strain ATCC BAA-1226 / DSM 17306 / VKM B-2378 / K5) protein is Lipoyl synthase.